The primary structure comprises 480 residues: Long-chain acyl-protein thioester reductase (480 aa).

This sequence belongs to the LuxC family.

It carries out the reaction a long-chain fatty aldehyde + NADP(+) + CoA = a long-chain fatty acyl-CoA + NADPH + H(+). Its pathway is lipid metabolism; fatty acid reduction for biolumincescence. Functionally, luxC is the fatty acid reductase enzyme responsible for synthesis of the aldehyde substrate for the luminescent reaction catalyzed by luciferase. This chain is Long-chain acyl-protein thioester reductase (luxC), found in Photorhabdus luminescens (Xenorhabdus luminescens).